Consider the following 352-residue polypeptide: N-lysine methyltransferase KMT5A (352 aa).

The tract at residues 21–51 is disordered; sequence AVAATAPGPEMVERRGPGRPRTNGENVFTGQ. Ser59 bears the Phosphoserine mark. Residues 87-202 form a disordered region; sequence PLAGIYRKRD…KSKAELQSEE (116 aa). Positions 109-121 are enriched in basic and acidic residues; it reads MKAEEQKIKDARR. Thr140 is subject to Phosphothreonine. The segment covering 156–172 has biased composition (basic residues); the sequence is GLKKPVRGKQAPRKKAQ. The 122-residue stretch at 216–337 folds into the SET domain; that stretch reads EGMKIDLIDG…AGEELLYDYG (122 aa). S-adenosyl-L-methionine-binding positions include 226-228, Tyr271, and 298-299; these read KGR and NH.

This sequence belongs to the class V-like SAM-binding methyltransferase superfamily. Histone-lysine methyltransferase family. PR/SET subfamily. In terms of assembly, interacts with L3MBTL1. Interacts with SIRT2 (phosphorylated form); the interaction is direct, stimulates KMT5A-mediated methyltransferase activity at histone H4 'Lys-20' (H4K20me1) and is increased in a H(2)O(2)-induced oxidative stress-dependent manner. In terms of processing, ubiquitinated and degraded by the DCX(DTL) complex.

It localises to the nucleus. The protein resides in the chromosome. It catalyses the reaction L-lysyl(20)-[histone H4] + S-adenosyl-L-methionine = N(6)-methyl-L-lysyl(20)-[histone H4] + S-adenosyl-L-homocysteine + H(+). The enzyme catalyses L-lysyl-[protein] + S-adenosyl-L-methionine = N(6)-methyl-L-lysyl-[protein] + S-adenosyl-L-homocysteine + H(+). Its function is as follows. Protein-lysine N-methyltransferase that monomethylates both histones and non-histone proteins. Specifically monomethylates 'Lys-20' of histone H4 (H4K20me1). H4K20me1 is enriched during mitosis and represents a specific tag for epigenetic transcriptional repression. Mainly functions in euchromatin regions, thereby playing a central role in the silencing of euchromatic genes. Required for cell proliferation, probably by contributing to the maintenance of proper higher-order structure of DNA during mitosis. Involved in chromosome condensation and proper cytokinesis. Nucleosomes are preferred as substrate compared to free histones. Mediates monomethylation of p53/TP53 at 'Lys-382', leading to repress p53/TP53-target genes. Plays a negative role in TGF-beta response regulation and a positive role in cell migration. The sequence is that of N-lysine methyltransferase KMT5A from Bos taurus (Bovine).